We begin with the raw amino-acid sequence, 213 residues long: ATP-dependent dethiobiotin synthetase BioD 2 (213 aa).

13–18 (DIGKTI) serves as a coordination point for ATP. Position 17 (Thr17) interacts with Mg(2+). Residue Lys38 is part of the active site. Thr42 provides a ligand contact to substrate. ATP-binding positions include Asp50 and 115–118 (EGAG). Asp50 and Glu115 together coordinate Mg(2+).

The protein belongs to the dethiobiotin synthetase family. Homodimer. The cofactor is Mg(2+).

The protein resides in the cytoplasm. It catalyses the reaction (7R,8S)-7,8-diammoniononanoate + CO2 + ATP = (4R,5S)-dethiobiotin + ADP + phosphate + 3 H(+). The protein operates within cofactor biosynthesis; biotin biosynthesis; biotin from 7,8-diaminononanoate: step 1/2. Functionally, catalyzes a mechanistically unusual reaction, the ATP-dependent insertion of CO2 between the N7 and N8 nitrogen atoms of 7,8-diaminopelargonic acid (DAPA, also called 7,8-diammoniononanoate) to form a ureido ring. In Pasteurella multocida (strain Pm70), this protein is ATP-dependent dethiobiotin synthetase BioD 2.